A 250-amino-acid polypeptide reads, in one-letter code: UDP-2,3-diacylglucosamine hydrolase (250 aa).

Positions 7, 9, 40, 78, and 113 each coordinate Mn(2+). Position 78 to 79 (78 to 79) interacts with substrate; the sequence is NR. Substrate-binding residues include Asp121, Ser159, Thr163, Lys166, and His194. The Mn(2+) site is built by His194 and His196.

This sequence belongs to the LpxH family. Mn(2+) serves as cofactor.

Its subcellular location is the cell inner membrane. It carries out the reaction UDP-2-N,3-O-bis[(3R)-3-hydroxytetradecanoyl]-alpha-D-glucosamine + H2O = 2-N,3-O-bis[(3R)-3-hydroxytetradecanoyl]-alpha-D-glucosaminyl 1-phosphate + UMP + 2 H(+). The protein operates within glycolipid biosynthesis; lipid IV(A) biosynthesis; lipid IV(A) from (3R)-3-hydroxytetradecanoyl-[acyl-carrier-protein] and UDP-N-acetyl-alpha-D-glucosamine: step 4/6. Functionally, hydrolyzes the pyrophosphate bond of UDP-2,3-diacylglucosamine to yield 2,3-diacylglucosamine 1-phosphate (lipid X) and UMP by catalyzing the attack of water at the alpha-P atom. Involved in the biosynthesis of lipid A, a phosphorylated glycolipid that anchors the lipopolysaccharide to the outer membrane of the cell. The protein is UDP-2,3-diacylglucosamine hydrolase of Pseudomonas fluorescens (strain ATCC BAA-477 / NRRL B-23932 / Pf-5).